Here is a 436-residue protein sequence, read N- to C-terminus: Arginine-hydroxylase NDUFAF5, mitochondrial (436 aa).

The transit peptide at 1-25 (MLRTTFRKGFNLKCFSKDWNQTRQY) directs the protein to the mitochondrion. The disordered stretch occupies residues 365 to 436 (VTLSQQQQQQ…DEINKNKDDK (72 aa)). The segment covering 369-380 (QQQQQQGIEPQQ) has biased composition (low complexity). Basic and acidic residues-rich tracts occupy residues 391 to 411 (PKTDDFVIKRLDYHGNFHFEK) and 421 to 436 (QNKESSDEINKNKDDK).

It belongs to the methyltransferase superfamily.

The protein localises to the mitochondrion. Involved in the assembly of mitochondrial NADH:ubiquinone oxidoreductase complex (complex I, MT-ND1) at early stages. Probably acts as an arginine hydroxylase. May also have methyltransferase activity. This is Arginine-hydroxylase NDUFAF5, mitochondrial from Dictyostelium discoideum (Social amoeba).